The following is a 138-amino-acid chain: MVDLSKNDGGSGKAGKGVSDAIDTVLYYVVDLKKQQPMVQLGVGAGFGTVTGYFVTKGGRLVAATVGISFLLAQFAIHKGYITLNESKIERDMKNLHKSVMNKVSGKKVINISDSFVSEYRWILGGFAAGMLIGFSVA.

2 consecutive transmembrane segments (helical) span residues 37–56 (PMVQ…YFVT) and 61–78 (LVAA…FAIH). N-linked (GlcNAc...) asparagine glycosylation is found at asparagine 85 and asparagine 111.

Belongs to the FUN14 family. As to expression, broadly expressed in somatic tissues. Expressed in the hermaphrodite spermatheca and male gonad. Expressed in spermatids, but not expressed in oocytes.

The protein localises to the mitochondrion outer membrane. Mitophagy receptor which plays a role in paternal mitochondria degradation in embryos after the two-cell stage. The protein is FUN14 domain-containing protein fndc-1 of Caenorhabditis elegans.